A 624-amino-acid polypeptide reads, in one-letter code: Leucine-rich repeat and IQ domain-containing protein 3 (624 aa).

LRR repeat units lie at residues Ser-51–Ile-72, Lys-73–Asn-94, and Asn-98–Ser-119. Positions Cys-132–His-179 constitute an LRRCT domain. Residues His-215 to Lys-244 enclose the IQ domain. The stretch at Lys-553–Leu-614 forms a coiled coil.

This Homo sapiens (Human) protein is Leucine-rich repeat and IQ domain-containing protein 3 (LRRIQ3).